The primary structure comprises 300 residues: MNQSYGRLVSRAAIAATAMASLLLLIKIFAWWYTGSVSILAALVDSLVDIGASLTNLLVVRYSLQPADDNHSFGHGKAESLAALAQSMFISGSALFLFLTGIQHLISPTPMNDPGVGIIVTIVALVCTILLVSFQRWVVRRTQSQAVRADMLHYQSDVMMNGAILLALALSWYGWHSADALFALGIGIYILYSALRMGYEAVQSLLDRALPDDERQEIIDIVTSWPGVSGAHDLRTRQSGPTRFIQIHLEMEDSLPLVQAHMVADQVEQAILRRFPGSDVIIHQDPCSVVPREGKRFELS.

The next 6 helical transmembrane spans lie at 12–32 (AAIA…FAWW), 39–59 (ILAA…NLLV), 82–102 (AALA…LTGI), 114–134 (PGVG…LVSF), 151–171 (MLHY…LALS), and 172–192 (WYGW…YILY). Zn(2+)-binding residues include D45 and D49. Residues H153 and D157 each coordinate Zn(2+).

The protein belongs to the cation diffusion facilitator (CDF) transporter (TC 2.A.4) family. FieF subfamily. Homodimer.

The protein localises to the cell inner membrane. It catalyses the reaction Zn(2+)(in) + H(+)(out) = Zn(2+)(out) + H(+)(in). The enzyme catalyses Cd(2+)(in) + H(+)(out) = Cd(2+)(out) + H(+)(in). It carries out the reaction Fe(2+)(in) + H(+)(out) = Fe(2+)(out) + H(+)(in). Functionally, divalent metal cation transporter which exports Zn(2+), Cd(2+) and possibly Fe(2+). May be involved in zinc and iron detoxification by efflux. The protein is Cation-efflux pump FieF of Escherichia fergusonii (strain ATCC 35469 / DSM 13698 / CCUG 18766 / IAM 14443 / JCM 21226 / LMG 7866 / NBRC 102419 / NCTC 12128 / CDC 0568-73).